Here is a 157-residue protein sequence, read N- to C-terminus: Transcription elongation factor GreA (157 aa).

Residues 12–74 are a coiled coil; sequence LKKLEEELEY…TLEAMLKNAK (63 aa).

The protein belongs to the GreA/GreB family.

Its function is as follows. Necessary for efficient RNA polymerase transcription elongation past template-encoded arresting sites. The arresting sites in DNA have the property of trapping a certain fraction of elongating RNA polymerases that pass through, resulting in locked ternary complexes. Cleavage of the nascent transcript by cleavage factors such as GreA or GreB allows the resumption of elongation from the new 3'terminus. GreA releases sequences of 2 to 3 nucleotides. The protein is Transcription elongation factor GreA of Thermoanaerobacter pseudethanolicus (strain ATCC 33223 / 39E) (Clostridium thermohydrosulfuricum).